A 276-amino-acid chain; its full sequence is Large ribosomal subunit protein uL2 (276 aa).

The disordered stretch occupies residues 219–276 (TVRGSVMNPNDHPHGGGEGRAPIGRKSPMSPWGKPTLGYKTRQRNKPSDKYIVRKRKK).

Belongs to the universal ribosomal protein uL2 family. As to quaternary structure, part of the 50S ribosomal subunit. Forms a bridge to the 30S subunit in the 70S ribosome.

Its function is as follows. One of the primary rRNA binding proteins. Required for association of the 30S and 50S subunits to form the 70S ribosome, for tRNA binding and peptide bond formation. It has been suggested to have peptidyltransferase activity; this is somewhat controversial. Makes several contacts with the 16S rRNA in the 70S ribosome. In Oceanobacillus iheyensis (strain DSM 14371 / CIP 107618 / JCM 11309 / KCTC 3954 / HTE831), this protein is Large ribosomal subunit protein uL2.